Consider the following 630-residue polypeptide: Arginine--tRNA ligase (630 aa).

A 'HIGH' region motif is present at residues Ala-120–His-130.

Belongs to the class-I aminoacyl-tRNA synthetase family.

The protein resides in the cytoplasm. It catalyses the reaction tRNA(Arg) + L-arginine + ATP = L-arginyl-tRNA(Arg) + AMP + diphosphate. In Pyrobaculum aerophilum (strain ATCC 51768 / DSM 7523 / JCM 9630 / CIP 104966 / NBRC 100827 / IM2), this protein is Arginine--tRNA ligase.